The primary structure comprises 1334 residues: Aldehyde oxidase 1 (1334 aa).

Residues 5–92 (PELLFYVNGR…GAAVTTVEGI (88 aa)) form the 2Fe-2S ferredoxin-type domain. 4 residues coordinate [2Fe-2S] cluster: C44, C49, C52, and C74. Position 113 (Q113) interacts with Mo-molybdopterin. The [2Fe-2S] cluster site is built by C114, C117, C149, and C151. Residue C151 participates in Mo-molybdopterin binding. The FAD-binding PCMH-type domain maps to 236 to 421 (FSGERMMWIS…ASVHIPYSRK (186 aa)). Residues 264–271 (VVMGNTSV), A345, S354, H358, D367, and L411 contribute to the FAD site. Mo-molybdopterin contacts are provided by residues 802–803 (AF) and M1043. S1064 is subject to Phosphoserine. Residues 1084-1087 (GSVV), Q1199, and L1264 each bind Mo-molybdopterin. Catalysis depends on E1266, which acts as the Proton acceptor; for azaheterocycle hydroxylase activity.

Belongs to the xanthine dehydrogenase family. In terms of assembly, homodimer. [2Fe-2S] cluster serves as cofactor. Requires FAD as cofactor. It depends on Mo-molybdopterin as a cofactor. The N-terminus is blocked. Very high expression in liver and lung. High expression in kidney, pancreas, brain stem and spinal cord. Moderate expression in heart, testis, eye, cerebral cortex and cerebellum. Low expression in stomach and muscle.

The protein resides in the cytoplasm. It carries out the reaction an aldehyde + O2 + H2O = a carboxylate + H2O2 + H(+). It catalyses the reaction retinal + O2 + H2O = retinoate + H2O2 + H(+). The enzyme catalyses all-trans-retinal + O2 + H2O = all-trans-retinoate + H2O2 + H(+). Its activity is regulated as follows. Inhibited by hydralazine and menadione. Not inhibited by BOF-4272 or allopurinol, xanthine dehydrogenase potent inhibitors. In contrast to guinea pig, human and rat, isovanillin is not an inhibitor but a substrate for AOX1 in rabbit. Functionally, oxidase with broad substrate specificity, oxidizing aromatic azaheterocycles, such as N1-methylnicotinamide, N-methylphthalazinium and phthalazine, as well as aldehydes, such as benzaldehyde, retinal, pyridoxal, and vanillin. Plays a key role in the metabolism of xenobiotics and drugs containing aromatic azaheterocyclic substituents. Participates in the bioactivation of prodrugs such as famciclovir, catalyzing the oxidation step from 6-deoxypenciclovir to penciclovir, which is a potent antiviral agent. Is probably involved in the regulation of reactive oxygen species homeostasis. May be a prominent source of superoxide generation via the one-electron reduction of molecular oxygen. May also catalyze nitric oxide (NO) production via the reduction of nitrite to NO with NADH or aldehyde as electron donor. May play a role in adipogenesis. Cannot use hypoxanthine and all-trans-retinol as substrate. The polypeptide is Aldehyde oxidase 1 (Oryctolagus cuniculus (Rabbit)).